The primary structure comprises 90 residues: MPNIKSAIKRVEIAKVRTIKNAAAKSTLRTTIRRFEESLSTDAETAKLALNKATRALDKASSKGLVHKNTAARKKSRLTKRYAKQFAQVG.

Belongs to the bacterial ribosomal protein bS20 family.

Functionally, binds directly to 16S ribosomal RNA. This Desulfitobacterium hafniense (strain DSM 10664 / DCB-2) protein is Small ribosomal subunit protein bS20.